We begin with the raw amino-acid sequence, 355 residues long: Uroporphyrinogen decarboxylase (355 aa).

Substrate contacts are provided by residues 27–31 (RQAGR), Asp78, Tyr155, Ser210, and His328.

It belongs to the uroporphyrinogen decarboxylase family. In terms of assembly, homodimer.

It is found in the cytoplasm. It catalyses the reaction uroporphyrinogen III + 4 H(+) = coproporphyrinogen III + 4 CO2. Its pathway is porphyrin-containing compound metabolism; protoporphyrin-IX biosynthesis; coproporphyrinogen-III from 5-aminolevulinate: step 4/4. Its function is as follows. Catalyzes the decarboxylation of four acetate groups of uroporphyrinogen-III to yield coproporphyrinogen-III. This is Uroporphyrinogen decarboxylase from Pseudomonas fluorescens (strain ATCC BAA-477 / NRRL B-23932 / Pf-5).